Here is a 380-residue protein sequence, read N- to C-terminus: Cytochrome b (380 aa).

4 consecutive transmembrane segments (helical) span residues 34–54, 78–99, 114–134, and 179–199; these read FGSL…FLAM, WLLR…YMHI, WNIG…GYVL, and FFAF…VHLL. Residues His-84 and His-98 each coordinate heme b. Positions 183 and 197 each coordinate heme b. His-202 contributes to the a ubiquinone binding site. 4 helical membrane passes run 227–247, 289–309, 321–341, and 348–368; these read YKDV…ALFS, LGGV…PFVH, LAQV…WLGG, and YIFL…LLIP.

It belongs to the cytochrome b family. The cytochrome bc1 complex contains 3 respiratory subunits (MT-CYB, CYC1 and UQCRFS1), 2 core proteins (UQCRC1 and UQCRC2) and probably 6 low-molecular weight proteins. It depends on heme b as a cofactor.

The protein localises to the mitochondrion inner membrane. Functionally, component of the ubiquinol-cytochrome c reductase complex (complex III or cytochrome b-c1 complex) that is part of the mitochondrial respiratory chain. The b-c1 complex mediates electron transfer from ubiquinol to cytochrome c. Contributes to the generation of a proton gradient across the mitochondrial membrane that is then used for ATP synthesis. The chain is Cytochrome b (MT-CYB) from Branchiostoma floridae (Florida lancelet).